The chain runs to 291 residues: Acetyl-coenzyme A carboxylase carboxyl transferase subunit beta (291 aa).

Residues 29–291 enclose the CoA carboxyltransferase N-terminal domain; sequence IMTKCPDCKK…TGGDLEWLEN (263 aa). C33, C36, C52, and C55 together coordinate Zn(2+). The C4-type zinc-finger motif lies at 33–55; that stretch reads CPDCKKIMLTKELDKNLRVCMNC.

Belongs to the AccD/PCCB family. As to quaternary structure, acetyl-CoA carboxylase is a heterohexamer composed of biotin carboxyl carrier protein (AccB), biotin carboxylase (AccC) and two subunits each of ACCase subunit alpha (AccA) and ACCase subunit beta (AccD). Requires Zn(2+) as cofactor.

The protein resides in the cytoplasm. It catalyses the reaction N(6)-carboxybiotinyl-L-lysyl-[protein] + acetyl-CoA = N(6)-biotinyl-L-lysyl-[protein] + malonyl-CoA. Its pathway is lipid metabolism; malonyl-CoA biosynthesis; malonyl-CoA from acetyl-CoA: step 1/1. In terms of biological role, component of the acetyl coenzyme A carboxylase (ACC) complex. Biotin carboxylase (BC) catalyzes the carboxylation of biotin on its carrier protein (BCCP) and then the CO(2) group is transferred by the transcarboxylase to acetyl-CoA to form malonyl-CoA. The protein is Acetyl-coenzyme A carboxylase carboxyl transferase subunit beta of Bacillus licheniformis (strain ATCC 14580 / DSM 13 / JCM 2505 / CCUG 7422 / NBRC 12200 / NCIMB 9375 / NCTC 10341 / NRRL NRS-1264 / Gibson 46).